The primary structure comprises 312 residues: Ribosomal protein L11 methyltransferase (312 aa).

The S-adenosyl-L-methionine site is built by Thr-164, Gly-185, Asp-207, and Asn-249.

The protein belongs to the methyltransferase superfamily. PrmA family.

The protein resides in the cytoplasm. The catalysed reaction is L-lysyl-[protein] + 3 S-adenosyl-L-methionine = N(6),N(6),N(6)-trimethyl-L-lysyl-[protein] + 3 S-adenosyl-L-homocysteine + 3 H(+). In terms of biological role, methylates ribosomal protein L11. This chain is Ribosomal protein L11 methyltransferase, found in Clostridium novyi (strain NT).